Here is a 309-residue protein sequence, read N- to C-terminus: NAD kinase (309 aa).

Catalysis depends on Asp-89, which acts as the Proton acceptor. NAD(+) contacts are provided by residues 89 to 90 (DG), 163 to 164 (NE), His-174, Arg-191, Asp-193, and 204 to 209 (TAYALS).

Belongs to the NAD kinase family. Requires a divalent metal cation as cofactor.

The protein localises to the cytoplasm. It carries out the reaction NAD(+) + ATP = ADP + NADP(+) + H(+). Involved in the regulation of the intracellular balance of NAD and NADP, and is a key enzyme in the biosynthesis of NADP. Catalyzes specifically the phosphorylation on 2'-hydroxyl of the adenosine moiety of NAD to yield NADP. The protein is NAD kinase of Shewanella sp. (strain W3-18-1).